The primary structure comprises 681 residues: NAD(P)H-quinone oxidoreductase chain 5 (681 aa).

Helical transmembrane passes span leucine 7–isoleucine 27, isoleucine 39–leucine 59, isoleucine 89–isoleucine 109, glycine 120–isoleucine 140, leucine 144–phenylalanine 164, glycine 188–isoleucine 208, glycine 219–alanine 239, threonine 258–alanine 278, valine 289–alanine 309, leucine 327–methionine 347, phenylalanine 352–glycine 372, alanine 395–tryptophan 415, isoleucine 420–glycine 440, leucine 509–glycine 529, phenylalanine 558–leucine 578, and alanine 660–leucine 680.

The protein belongs to the complex I subunit 5 family.

It is found in the cell membrane. It catalyses the reaction a plastoquinone + NADH + (n+1) H(+)(in) = a plastoquinol + NAD(+) + n H(+)(out). The enzyme catalyses a plastoquinone + NADPH + (n+1) H(+)(in) = a plastoquinol + NADP(+) + n H(+)(out). In terms of biological role, NDH-1 shuttles electrons from NAD(P)H, via FMN and iron-sulfur (Fe-S) centers, to quinones in the respiratory chain. The immediate electron acceptor for the enzyme in this species is believed to be plastoquinone. Couples the redox reaction to proton translocation (for every two electrons transferred, four hydrogen ions are translocated across the cytoplasmic membrane), and thus conserves the redox energy in a proton gradient. This Synechocystis sp. (strain ATCC 27184 / PCC 6803 / Kazusa) protein is NAD(P)H-quinone oxidoreductase chain 5 (ndhF).